We begin with the raw amino-acid sequence, 486 residues long: UDP-N-acetylmuramate--L-alanine ligase (486 aa).

129 to 135 (GTHGKTT) serves as a coordination point for ATP.

It belongs to the MurCDEF family.

It localises to the cytoplasm. It catalyses the reaction UDP-N-acetyl-alpha-D-muramate + L-alanine + ATP = UDP-N-acetyl-alpha-D-muramoyl-L-alanine + ADP + phosphate + H(+). It functions in the pathway cell wall biogenesis; peptidoglycan biosynthesis. Cell wall formation. The chain is UDP-N-acetylmuramate--L-alanine ligase from Vibrio cholerae serotype O1 (strain ATCC 39541 / Classical Ogawa 395 / O395).